A 136-amino-acid chain; its full sequence is Nucleoside diphosphate kinase (136 aa).

6 residues coordinate ATP: Lys10, Phe58, Arg86, Thr92, Arg104, and Asn114. The Pros-phosphohistidine intermediate role is filled by His117.

Belongs to the NDK family. Homotetramer. It depends on Mg(2+) as a cofactor.

The protein resides in the cytoplasm. It catalyses the reaction a 2'-deoxyribonucleoside 5'-diphosphate + ATP = a 2'-deoxyribonucleoside 5'-triphosphate + ADP. The enzyme catalyses a ribonucleoside 5'-diphosphate + ATP = a ribonucleoside 5'-triphosphate + ADP. Functionally, major role in the synthesis of nucleoside triphosphates other than ATP. The ATP gamma phosphate is transferred to the NDP beta phosphate via a ping-pong mechanism, using a phosphorylated active-site intermediate. The polypeptide is Nucleoside diphosphate kinase (Corynebacterium efficiens (strain DSM 44549 / YS-314 / AJ 12310 / JCM 11189 / NBRC 100395)).